The following is a 261-amino-acid chain: Non-homologous end joining protein Ku 1 (261 aa).

One can recognise a Ku domain in the interval 12–171 (SFSLVAIPVQ…LITLHYSDEV (160 aa)).

It belongs to the prokaryotic Ku family. In terms of assembly, homodimer. Interacts with LigD.

Functionally, with LigD forms a non-homologous end joining (NHEJ) DNA repair enzyme, which repairs dsDNA breaks with reduced fidelity. Binds linear dsDNA with 5'- and 3'- overhangs but not closed circular dsDNA nor ssDNA. Recruits and stimulates the ligase activity of LigD. The chain is Non-homologous end joining protein Ku 1 from Geotalea uraniireducens (strain Rf4) (Geobacter uraniireducens).